The primary structure comprises 335 residues: Biotin synthase (335 aa).

A Radical SAM core domain is found at 46 to 274 (YNIQLASLFS…KSKIRLSAGR (229 aa)). The [4Fe-4S] cluster site is built by Cys-61, Cys-65, and Cys-68. Cys-105, Cys-137, Cys-197, and Arg-269 together coordinate [2Fe-2S] cluster.

This sequence belongs to the radical SAM superfamily. Biotin synthase family. As to quaternary structure, homodimer. The cofactor is [4Fe-4S] cluster. Requires [2Fe-2S] cluster as cofactor.

The enzyme catalyses (4R,5S)-dethiobiotin + (sulfur carrier)-SH + 2 reduced [2Fe-2S]-[ferredoxin] + 2 S-adenosyl-L-methionine = (sulfur carrier)-H + biotin + 2 5'-deoxyadenosine + 2 L-methionine + 2 oxidized [2Fe-2S]-[ferredoxin]. It participates in cofactor biosynthesis; biotin biosynthesis; biotin from 7,8-diaminononanoate: step 2/2. Catalyzes the conversion of dethiobiotin (DTB) to biotin by the insertion of a sulfur atom into dethiobiotin via a radical-based mechanism. This chain is Biotin synthase, found in Prochlorococcus marinus (strain AS9601).